A 473-amino-acid chain; its full sequence is UDP-N-acetylmuramate--L-alanine ligase (473 aa).

114–120 (GTHGKTT) lines the ATP pocket.

Belongs to the MurCDEF family.

Its subcellular location is the cytoplasm. The enzyme catalyses UDP-N-acetyl-alpha-D-muramate + L-alanine + ATP = UDP-N-acetyl-alpha-D-muramoyl-L-alanine + ADP + phosphate + H(+). Its pathway is cell wall biogenesis; peptidoglycan biosynthesis. Its function is as follows. Cell wall formation. This chain is UDP-N-acetylmuramate--L-alanine ligase, found in Chlorobium luteolum (strain DSM 273 / BCRC 81028 / 2530) (Pelodictyon luteolum).